Reading from the N-terminus, the 255-residue chain is BPI fold-containing family A member 1 (255 aa).

An N-terminal signal peptide occupies residues 1 to 19 (MFHIGSLVVLCGLLAPTTA). Positions 87–92 (LLGSLL) are important for surfactant activity and antibacterial properties. 3 N-linked (GlcNAc...) asparagine glycosylation sites follow: Asn157, Asn178, and Asn205. Cys179 and Cys223 are joined by a disulfide.

The protein belongs to the BPI/LBP/Plunc superfamily. Plunc family. As to quaternary structure, monomer. Interacts (via N-terminus) with SCNN1B, a subunit of the heterotrimeric epithelial sodium channel (ENaC); this inhibits proteolytic activation of ENaC. Expressed in trachea, and at lower levels in nasal epithelium.

It localises to the secreted. Its function is as follows. Lipid-binding protein which shows high specificity for the surfactant phospholipid dipalmitoylphosphatidylcholine (DPPC). Plays a role in the innate immune responses of the upper airways. Reduces the surface tension in secretions from airway epithelia and inhibits the formation of biofilm by pathogenic Gram-negative bacteria, such as P.aeruginosa and K.pneumoniae. Negatively regulates proteolytic cleavage of SCNN1G, an event that is required for activation of the epithelial sodium channel (ENaC), and thereby contributes to airway surface liquid homeostasis and proper clearance of mucus. Plays a role in the airway inflammatory response after exposure to irritants. May attract macrophages and neutrophils. The chain is BPI fold-containing family A member 1 (BPIFA1) from Bos taurus (Bovine).